Here is a 789-residue protein sequence, read N- to C-terminus: ATP-dependent 6-phosphofructokinase (789 aa).

An N-terminal catalytic PFK domain 1 region spans residues 1 to 404 (MSLKRNIRRL…NLETYKLLTK (404 aa)). ATP-binding positions include Gly-41, 104–105 (RC), and 134–137 (GDGS). Position 135 (Asp-135) interacts with Mg(2+). Substrate is bound by residues 180–182 (SID), Arg-217, 224–226 (MGR), Glu-280, Arg-307, and 313–316 (HVQR). Asp-182 serves as the catalytic Proton acceptor. An interdomain linker region spans residues 405–419 (LRTVEKDNLSGGQNF). A C-terminal regulatory PFK domain 2 region spans residues 420–789 (NVAVMNVGAP…EAMEDTEDYD (370 aa)). Residues Lys-489, 547–551 (TISNN), Arg-585, 592–594 (MGG), Glu-647, Arg-673, 679–682 (HAQQ), and Arg-753 each bind beta-D-fructose 2,6-bisphosphate.

The protein belongs to the phosphofructokinase type A (PFKA) family. ATP-dependent PFK group I subfamily. Eukaryotic two domain clade 'E' sub-subfamily. As to quaternary structure, homotetramer. The cofactor is Mg(2+).

The protein resides in the cytoplasm. It catalyses the reaction beta-D-fructose 6-phosphate + ATP = beta-D-fructose 1,6-bisphosphate + ADP + H(+). Its pathway is carbohydrate degradation; glycolysis; D-glyceraldehyde 3-phosphate and glycerone phosphate from D-glucose: step 3/4. With respect to regulation, allosterically activated by ADP, AMP, or fructose 2,6-bisphosphate, and allosterically inhibited by ATP or citrate. In terms of biological role, catalyzes the phosphorylation of D-fructose 6-phosphate to fructose 1,6-bisphosphate by ATP, the first committing step of glycolysis. This Haemonchus contortus (Barber pole worm) protein is ATP-dependent 6-phosphofructokinase (PFK).